Reading from the N-terminus, the 282-residue chain is Extent of cell elongation protein 1 (282 aa).

The signal sequence occupies residues 1 to 18 (MKFSKVASFAFLALSSQA). A helical transmembrane segment spans residues 68-92 (ISFAGIVSSIINQLPSIIQIIGNII).

It is found in the secreted. It localises to the host cell membrane. In terms of biological role, secreted protein cleaved by KEX2 in 8 similar peptides (ECE1-I to ECE1-VIII). Stimulates biofilm formation. Acts as a cytolytic peptide toxin that directly damages host epithelial membranes, triggers a danger response signaling pathway and activates epithelial immunity. Probably acts similarly to cationic antimicrobial peptide toxins, inducing lesions after binding to target cell membranes and causing an inward current associated with calcium influx. This is Extent of cell elongation protein 1 from Candida tropicalis (strain ATCC MYA-3404 / T1) (Yeast).